A 148-amino-acid chain; its full sequence is 3-dehydroquinate dehydratase (148 aa).

Tyrosine 23 acts as the Proton acceptor in catalysis. Positions 75, 81, and 88 each coordinate substrate. Histidine 101 serves as the catalytic Proton donor. Substrate is bound by residues 102–103 and arginine 112; that span reads LS.

Belongs to the type-II 3-dehydroquinase family. Homododecamer.

The enzyme catalyses 3-dehydroquinate = 3-dehydroshikimate + H2O. It participates in metabolic intermediate biosynthesis; chorismate biosynthesis; chorismate from D-erythrose 4-phosphate and phosphoenolpyruvate: step 3/7. In terms of biological role, catalyzes a trans-dehydration via an enolate intermediate. This chain is 3-dehydroquinate dehydratase, found in Xylella fastidiosa (strain M23).